Here is a 698-residue protein sequence, read N- to C-terminus: DNA ligase (698 aa).

Residues D47–D51, S96–L97, and E128 contribute to the NAD(+) site. Catalysis depends on K130, which acts as the N6-AMP-lysine intermediate. Residues R151, E186, K303, and K327 each coordinate NAD(+). Zn(2+) is bound by residues C422, C425, C440, and C446. Positions G620–E698 constitute a BRCT domain.

The protein belongs to the NAD-dependent DNA ligase family. LigA subfamily. Mg(2+) is required as a cofactor. Mn(2+) serves as cofactor.

The catalysed reaction is NAD(+) + (deoxyribonucleotide)n-3'-hydroxyl + 5'-phospho-(deoxyribonucleotide)m = (deoxyribonucleotide)n+m + AMP + beta-nicotinamide D-nucleotide.. Functionally, DNA ligase that catalyzes the formation of phosphodiester linkages between 5'-phosphoryl and 3'-hydroxyl groups in double-stranded DNA using NAD as a coenzyme and as the energy source for the reaction. It is essential for DNA replication and repair of damaged DNA. In Orientia tsutsugamushi (strain Boryong) (Rickettsia tsutsugamushi), this protein is DNA ligase.